Here is a 297-residue protein sequence, read N- to C-terminus: 4-hydroxy-tetrahydrodipicolinate synthase (297 aa).

Threonine 55 provides a ligand contact to pyruvate. The active-site Proton donor/acceptor is tyrosine 144. The active-site Schiff-base intermediate with substrate is lysine 172. Isoleucine 213 is a pyruvate binding site.

This sequence belongs to the DapA family. In terms of assembly, homotetramer; dimer of dimers.

The protein resides in the cytoplasm. It carries out the reaction L-aspartate 4-semialdehyde + pyruvate = (2S,4S)-4-hydroxy-2,3,4,5-tetrahydrodipicolinate + H2O + H(+). Its pathway is amino-acid biosynthesis; L-lysine biosynthesis via DAP pathway; (S)-tetrahydrodipicolinate from L-aspartate: step 3/4. Its function is as follows. Catalyzes the condensation of (S)-aspartate-beta-semialdehyde [(S)-ASA] and pyruvate to 4-hydroxy-tetrahydrodipicolinate (HTPA). The chain is 4-hydroxy-tetrahydrodipicolinate synthase from Lactococcus lactis subsp. lactis (strain IL1403) (Streptococcus lactis).